An 858-amino-acid polypeptide reads, in one-letter code: MTITSKLKKRRSLSTLITKIIILVLAPIILGIFVQSYYFSKQIIWQEVDRTKQQTSALILNIFESHFAAIQIHHDSNSKSDVILDFYSERNEEALNYFFLSIDQSDPSHTPEFRFLTDHQGIIWDDGNAHFYGINDSMLDGLTSKVTFSNNWYYVTSITSMGARHLLLRRVPVLEPKTGEVMGYSYNAVVLDNNFALMEKLKNEGNVDNVVLVANDIPVASSLAGDESYKIFDVLKRKETQKKLDQLLIIQTPIEVNAAITNLKLLTVQDNQSVVTLQIQHFLAMLASVIGMIMIALMTKEWIENRVVEELGSLMSYTRSAREEKGFERFGGSDIEEFDHIGSTLESTFEELEAQKRSFRDLFNFALSPIMVWSEAGVLIQINPAARKELVIENDIETMHPVFKGFKDKLVPHLRMAAQGATLTGVNVPIGDKVFRWNLSPIRVDGDISGIIVQGQDITTLIEAEKQSNLARREAEKSAQARADFLAKMSHEIRTPINGILGVAQLLKDSVEAEEQKNQIDVLRHSGEHLLAVLNDILDFSKIEQGKFNIQKHPFSFADTMRTLENIYRPICENKGVELVIENQLDGNVEIFTDQVRLNQILFNLVSNAVKFTPSGCVRLHAELEQFYGADNSVLVVEISDTGIGIESDKLDEMFEPFVQEEATTTREYGGSGLGLTIVKNLVDMLDGDVQVRSQKGQGTTFVVTLPVKDRERVLAPLDSSQRVKPAELFDESLKVLLVEDNHTNAFILKAFCTKYKMQVDWAKDGLEAMEFLKDHSYDLILMDNQLPHLGGIETTKEIRQNLKLGTPIYACTADTAQETSDAFMEAGANYVLLKPIKENALHEAFVDFKQRFLIERT.

The next 2 membrane-spanning stretches (helical) occupy residues 14–34 (STLITKIIILVLAPIILGIFV) and 362–382 (LFNFALSPIMVWSEAGVLIQI). A Histidine kinase domain is found at 488–710 (KMSHEIRTPI…TFVVTLPVKD (223 aa)). Position 491 is a phosphohistidine; by autocatalysis (His491). One can recognise a Response regulatory domain in the interval 735–850 (KVLLVEDNHT…ALHEAFVDFK (116 aa)). 4-aspartylphosphate is present on Asp784.

In terms of assembly, binds the complex formed by the autoinducer and LuxP.

It is found in the cell inner membrane. The catalysed reaction is ATP + protein L-histidine = ADP + protein N-phospho-L-histidine.. At low cell density, in absence of autoinducer has a kinase activity, and autophosphorylates on a histidine residue. The phosphoryl group is then transferred to an aspartate residue in the response regulator domain. The phosphoryl group is transferred to LuxU, and ultimately to LuxO. At high cell density, in the presence of autoinducer, the kinase activity is inactivated, and the response regulator domain has a phosphatase activity. In Vibrio parahaemolyticus serotype O3:K6 (strain RIMD 2210633), this protein is Autoinducer 2 sensor kinase/phosphatase LuxQ (luxQ).